A 53-amino-acid polypeptide reads, in one-letter code: UPF0337 protein LJ_0034.1 (53 aa).

The tract at residues Ala-27–Glu-53 is disordered. The span at Lys-44–Glu-53 shows a compositional bias: basic and acidic residues.

Belongs to the UPF0337 (CsbD) family.

The chain is UPF0337 protein LJ_0034.1 from Lactobacillus johnsonii (strain CNCM I-12250 / La1 / NCC 533).